A 218-amino-acid chain; its full sequence is Thiamine-phosphate synthase (218 aa).

Residues 43–47 and N78 each bind 4-amino-2-methyl-5-(diphosphooxymethyl)pyrimidine; that span reads QFRDK. Mg(2+) is bound by residues D79 and D98. S117 lines the 4-amino-2-methyl-5-(diphosphooxymethyl)pyrimidine pocket. Residue 143–145 coordinates 2-[(2R,5Z)-2-carboxy-4-methylthiazol-5(2H)-ylidene]ethyl phosphate; that stretch reads TNS. K146 is a binding site for 4-amino-2-methyl-5-(diphosphooxymethyl)pyrimidine. 2-[(2R,5Z)-2-carboxy-4-methylthiazol-5(2H)-ylidene]ethyl phosphate contacts are provided by residues G174 and 194 to 195; that span reads IS.

It belongs to the thiamine-phosphate synthase family. Requires Mg(2+) as cofactor.

It catalyses the reaction 2-[(2R,5Z)-2-carboxy-4-methylthiazol-5(2H)-ylidene]ethyl phosphate + 4-amino-2-methyl-5-(diphosphooxymethyl)pyrimidine + 2 H(+) = thiamine phosphate + CO2 + diphosphate. The enzyme catalyses 2-(2-carboxy-4-methylthiazol-5-yl)ethyl phosphate + 4-amino-2-methyl-5-(diphosphooxymethyl)pyrimidine + 2 H(+) = thiamine phosphate + CO2 + diphosphate. The catalysed reaction is 4-methyl-5-(2-phosphooxyethyl)-thiazole + 4-amino-2-methyl-5-(diphosphooxymethyl)pyrimidine + H(+) = thiamine phosphate + diphosphate. The protein operates within cofactor biosynthesis; thiamine diphosphate biosynthesis; thiamine phosphate from 4-amino-2-methyl-5-diphosphomethylpyrimidine and 4-methyl-5-(2-phosphoethyl)-thiazole: step 1/1. Its function is as follows. Condenses 4-methyl-5-(beta-hydroxyethyl)thiazole monophosphate (THZ-P) and 2-methyl-4-amino-5-hydroxymethyl pyrimidine pyrophosphate (HMP-PP) to form thiamine monophosphate (TMP). In Lactococcus lactis subsp. cremoris (strain MG1363), this protein is Thiamine-phosphate synthase.